The chain runs to 269 residues: Formamidopyrimidine-DNA glycosylase (269 aa).

P2 (schiff-base intermediate with DNA) is an active-site residue. E3 functions as the Proton donor in the catalytic mechanism. K57 (proton donor; for beta-elimination activity) is an active-site residue. Residues H90, R109, and K150 each contribute to the DNA site. Residues 235-269 (QVYGRKGEPCRVCGTPIVATKHAQRATFYCRQCQK) form an FPG-type zinc finger. R259 acts as the Proton donor; for delta-elimination activity in catalysis.

It belongs to the FPG family. As to quaternary structure, monomer. The cofactor is Zn(2+).

The enzyme catalyses Hydrolysis of DNA containing ring-opened 7-methylguanine residues, releasing 2,6-diamino-4-hydroxy-5-(N-methyl)formamidopyrimidine.. It catalyses the reaction 2'-deoxyribonucleotide-(2'-deoxyribose 5'-phosphate)-2'-deoxyribonucleotide-DNA = a 3'-end 2'-deoxyribonucleotide-(2,3-dehydro-2,3-deoxyribose 5'-phosphate)-DNA + a 5'-end 5'-phospho-2'-deoxyribonucleoside-DNA + H(+). In terms of biological role, involved in base excision repair of DNA damaged by oxidation or by mutagenic agents. Acts as a DNA glycosylase that recognizes and removes damaged bases. Has a preference for oxidized purines, such as 7,8-dihydro-8-oxoguanine (8-oxoG). Has AP (apurinic/apyrimidinic) lyase activity and introduces nicks in the DNA strand. Cleaves the DNA backbone by beta-delta elimination to generate a single-strand break at the site of the removed base with both 3'- and 5'-phosphates. The sequence is that of Formamidopyrimidine-DNA glycosylase from Escherichia coli O157:H7.